The chain runs to 206 residues: Probable thymidylate kinase (206 aa).

10 to 17 provides a ligand contact to ATP; sequence GIDGSGKS.

Belongs to the thymidylate kinase family.

The enzyme catalyses dTMP + ATP = dTDP + ADP. The protein is Probable thymidylate kinase of Methanosarcina acetivorans (strain ATCC 35395 / DSM 2834 / JCM 12185 / C2A).